A 186-amino-acid polypeptide reads, in one-letter code: Large ribosomal subunit protein uL6 (186 aa).

Belongs to the universal ribosomal protein uL6 family. In terms of assembly, part of the 50S ribosomal subunit.

This protein binds to the 23S rRNA, and is important in its secondary structure. It is located near the subunit interface in the base of the L7/L12 stalk, and near the tRNA binding site of the peptidyltransferase center. In Hyperthermus butylicus (strain DSM 5456 / JCM 9403 / PLM1-5), this protein is Large ribosomal subunit protein uL6.